The chain runs to 1531 residues: Protein turtle (1531 aa).

The Extracellular portion of the chain corresponds to 1–858; sequence MGVCADLGSH…PARVKHKAIT (858 aa). Positions 19 to 44 are disordered; sequence QHNTEKSKEQQQQSQPLEIPEQRASK. 5 Ig-like C2-type domains span residues 132-243, 253-340, 344-436, 440-529, and 536-624; these read PEDA…KNGT, PRFS…ARVI, GAVI…AYLS, PAKV…GVMD, and PAFT…MAVT. 5 disulfides stabilise this stretch: cysteine 150–cysteine 227, cysteine 275–cysteine 324, cysteine 366–cysteine 419, cysteine 462–cysteine 513, and cysteine 558–cysteine 611. Fibronectin type-III domains follow at residues 632–728 and 760–851; these read QPHA…TLED and PPRN…VPAR. Residues 859–879 form a helical membrane-spanning segment; that stretch reads AGVVGGILFFIVAIILSVCAV. The Cytoplasmic segment spans residues 880–1531; the sequence is KICNKRKRRK…QAMQQMESVC (652 aa). Disordered regions lie at residues 1248–1269 and 1318–1395; these read EETRRQQQQKQHPLEDHFVPLQ and NLNL…SYPR. The span at 1333-1349 shows a compositional bias: low complexity; that stretch reads SPESRSSSSGFGSKNTS. Over residues 1380–1389 the composition is skewed to polar residues; it reads QQAQGQTPHG.

Belongs to the immunoglobulin superfamily. Turtle family. Interacts with bdl. Exclusively expressed in the central nervous system.

Its subcellular location is the membrane. Its function is as follows. Essential protein that plays a role in the establishment of coordinated motor control. In the developing eye, involved in axonal targeting of the R7 photoreceptor. The protein is Protein turtle (tutl) of Drosophila melanogaster (Fruit fly).